Consider the following 260-residue polypeptide: MTNFTTSTPHDALFKSFLMHPDTARDFMEIHLPKDLRELCDLDSLKLESASFVDEKLRALHSDILWSVKTREGDGYIYVVIEHQSREDIHMAFRLMRYSMAVMQRHIEHDKRRPLPLVIPMLFYHGSRSPYPWSLCWLDEFADPTTARKLYNAAFPLVDITVVPDDEIVQHRRVALLELIQKHIRQRDLMGLIDQLVVLLVTECANDSQITALLNYILLTGDEERFNEFISELTSRMPQHRERIMTIAERIHNDDCRANS.

This sequence belongs to the Rpn/YhgA-like nuclease family.

In terms of biological role, a low activity DNA endonuclease probably yielding 3'-hydroxyl ends. Involved in RecA-independent recombination and horizontal gene transfer. In Escherichia coli O157:H7, this protein is Recombination-promoting nuclease RpnD (rpnD).